The chain runs to 418 residues: Light-independent protochlorophyllide reductase subunit N (418 aa).

[4Fe-4S] cluster is bound by residues Cys-17, Cys-42, and Cys-103.

The protein belongs to the BchN/ChlN family. As to quaternary structure, protochlorophyllide reductase is composed of three subunits; ChlL, ChlN and ChlB. Forms a heterotetramer of two ChlB and two ChlN subunits. [4Fe-4S] cluster is required as a cofactor.

It catalyses the reaction chlorophyllide a + oxidized 2[4Fe-4S]-[ferredoxin] + 2 ADP + 2 phosphate = protochlorophyllide a + reduced 2[4Fe-4S]-[ferredoxin] + 2 ATP + 2 H2O. Its pathway is porphyrin-containing compound metabolism; chlorophyll biosynthesis (light-independent). In terms of biological role, component of the dark-operative protochlorophyllide reductase (DPOR) that uses Mg-ATP and reduced ferredoxin to reduce ring D of protochlorophyllide (Pchlide) to form chlorophyllide a (Chlide). This reaction is light-independent. The NB-protein (ChlN-ChlB) is the catalytic component of the complex. The protein is Light-independent protochlorophyllide reductase subunit N of Prochlorococcus marinus (strain MIT 9515).